Here is a 356-residue protein sequence, read N- to C-terminus: Isocitrate dehydrogenase [NAD] subunit 1, mitochondrial (356 aa).

Positions 106, 137, and 224 each coordinate substrate. A Mg(2+)-binding site is contributed by Asp224.

Belongs to the isocitrate and isopropylmalate dehydrogenases family. In terms of assembly, octamer of two non-identical subunits IDH1 and IDH2. Mg(2+) serves as cofactor. Requires Mn(2+) as cofactor.

The protein resides in the mitochondrion. It carries out the reaction D-threo-isocitrate + NAD(+) = 2-oxoglutarate + CO2 + NADH. In terms of biological role, performs an essential role in the oxidative function of the citric acid cycle. Also binds RNA; specifically to the 5'-untranslated leaders of mitochondrial mRNAs. The chain is Isocitrate dehydrogenase [NAD] subunit 1, mitochondrial (idh1) from Schizosaccharomyces pombe (strain 972 / ATCC 24843) (Fission yeast).